The sequence spans 353 residues: Photosystem II protein D1 (353 aa).

T2 carries the post-translational modification N-acetylthreonine. Phosphothreonine is present on T2. Transmembrane regions (helical) follow at residues 29–46, 118–133, and 142–156; these read YIGW…TATS, HFLL…EWEL, and WIAV…AATA. H118 serves as a coordination point for chlorophyll a. Y126 contacts pheophytin a. Residues D170 and E189 each coordinate [CaMn4O5] cluster. Residues 197–218 traverse the membrane as a helical segment; the sequence is FHMLGVAGVFGGSLFSAMHGSL. H198 contributes to the chlorophyll a binding site. Residues H215 and 264–265 contribute to the a quinone site; that span reads SF. H215 is a binding site for Fe cation. Position 272 (H272) interacts with Fe cation. Residues 274-288 form a helical membrane-spanning segment; the sequence is FLAAWPVVGIWFTAL. [CaMn4O5] cluster contacts are provided by H332, E333, D342, and A344. Residues 345 to 353 constitute a propeptide that is removed on maturation; the sequence is AVEVPSTNG.

Belongs to the reaction center PufL/M/PsbA/D family. As to quaternary structure, PSII is composed of 1 copy each of membrane proteins PsbA, PsbB, PsbC, PsbD, PsbE, PsbF, PsbH, PsbI, PsbJ, PsbK, PsbL, PsbM, PsbT, PsbX, PsbY, PsbZ, Psb30/Ycf12, at least 3 peripheral proteins of the oxygen-evolving complex and a large number of cofactors. It forms dimeric complexes. Requires The D1/D2 heterodimer binds P680, chlorophylls that are the primary electron donor of PSII, and subsequent electron acceptors. It shares a non-heme iron and each subunit binds pheophytin, quinone, additional chlorophylls, carotenoids and lipids. D1 provides most of the ligands for the Mn4-Ca-O5 cluster of the oxygen-evolving complex (OEC). There is also a Cl(-1) ion associated with D1 and D2, which is required for oxygen evolution. The PSII complex binds additional chlorophylls, carotenoids and specific lipids. as cofactor. In terms of processing, tyr-161 forms a radical intermediate that is referred to as redox-active TyrZ, YZ or Y-Z. Post-translationally, C-terminally processed by CTPA; processing is essential to allow assembly of the oxygen-evolving complex and thus photosynthetic growth.

It localises to the plastid. It is found in the chloroplast thylakoid membrane. It catalyses the reaction 2 a plastoquinone + 4 hnu + 2 H2O = 2 a plastoquinol + O2. Its function is as follows. Photosystem II (PSII) is a light-driven water:plastoquinone oxidoreductase that uses light energy to abstract electrons from H(2)O, generating O(2) and a proton gradient subsequently used for ATP formation. It consists of a core antenna complex that captures photons, and an electron transfer chain that converts photonic excitation into a charge separation. The D1/D2 (PsbA/PsbD) reaction center heterodimer binds P680, the primary electron donor of PSII as well as several subsequent electron acceptors. The polypeptide is Photosystem II protein D1 (Calycanthus floridus var. glaucus (Eastern sweetshrub)).